A 144-amino-acid polypeptide reads, in one-letter code: Transcription antitermination protein NusB (144 aa).

The protein belongs to the NusB family.

Its function is as follows. Involved in transcription antitermination. Required for transcription of ribosomal RNA (rRNA) genes. Binds specifically to the boxA antiterminator sequence of the ribosomal RNA (rrn) operons. In Pelotomaculum thermopropionicum (strain DSM 13744 / JCM 10971 / SI), this protein is Transcription antitermination protein NusB.